We begin with the raw amino-acid sequence, 294 residues long: Cytidine deaminase (294 aa).

CMP/dCMP-type deaminase domains follow at residues 48–168 (DEDA…FGPK) and 186–294 (VSGD…VLLG). Position 89–91 (89–91 (NME)) interacts with substrate. Zn(2+) is bound at residue His-102. Glu-104 functions as the Proton donor in the catalytic mechanism. Zn(2+)-binding residues include Cys-129 and Cys-132.

This sequence belongs to the cytidine and deoxycytidylate deaminase family. Homodimer. It depends on Zn(2+) as a cofactor.

The catalysed reaction is cytidine + H2O + H(+) = uridine + NH4(+). The enzyme catalyses 2'-deoxycytidine + H2O + H(+) = 2'-deoxyuridine + NH4(+). Its function is as follows. This enzyme scavenges exogenous and endogenous cytidine and 2'-deoxycytidine for UMP synthesis. This chain is Cytidine deaminase, found in Klebsiella pneumoniae subsp. pneumoniae (strain ATCC 700721 / MGH 78578).